A 38-amino-acid chain; its full sequence is Large ribosomal subunit protein bL36 (38 aa).

It belongs to the bacterial ribosomal protein bL36 family.

In Paraburkholderia phymatum (strain DSM 17167 / CIP 108236 / LMG 21445 / STM815) (Burkholderia phymatum), this protein is Large ribosomal subunit protein bL36.